Here is a 312-residue protein sequence, read N- to C-terminus: Bifunctional pinoresinol-lariciresinol reductase (312 aa).

NADP(+) is bound by residues 11–17, Arg-36, and Lys-45; that span reads GGTGYIG. The active-site Proton acceptor is the Lys-138. Arg-142 provides a ligand contact to NADP(+). His-270 contributes to the substrate binding site.

This sequence belongs to the NmrA-type oxidoreductase family. Isoflavone reductase subfamily. In terms of assembly, dimer.

It catalyses the reaction (+)-lariciresinol + NADP(+) = (+)-pinoresinol + NADPH + H(+). The enzyme catalyses (-)-secoisolariciresinol + NADP(+) = (+)-lariciresinol + NADPH + H(+). In terms of biological role, reductase involved in lignan biosynthesis. Catalyzes the enantioselective sequential conversion of (+)-pinoresinol into (+)-lariciresinol and of (+)-lariciresinol into (-)-secoisolariciresinol. Abstracts the 4R-hydride from the NADPH cofactor during catalysis. The protein is Bifunctional pinoresinol-lariciresinol reductase of Thuja plicata (Western red-cedar).